The primary structure comprises 303 residues: D-alanine--D-alanine ligase (303 aa).

Positions 104-300 constitute an ATP-grasp domain; that stretch reads KLLWNAVGLP…FEKLVERVLE (197 aa). ATP is bound at residue 132 to 187; the sequence is IAKLSLPVFVKPSSEGSSVGVFKVKTKEELLPAITAALEFDTIVLVEEFLTGAEYS. 3 residues coordinate Mg(2+): Asp254, Glu267, and Asn269.

This sequence belongs to the D-alanine--D-alanine ligase family. Mg(2+) is required as a cofactor. It depends on Mn(2+) as a cofactor.

It is found in the cytoplasm. The catalysed reaction is 2 D-alanine + ATP = D-alanyl-D-alanine + ADP + phosphate + H(+). It functions in the pathway cell wall biogenesis; peptidoglycan biosynthesis. Cell wall formation. The polypeptide is D-alanine--D-alanine ligase (Haemophilus ducreyi (strain 35000HP / ATCC 700724)).